The following is a 196-amino-acid chain: DNA replication complex GINS protein PSF1 (196 aa).

This sequence belongs to the GINS1/PSF1 family. As to quaternary structure, component of the GINS complex which is a heterotetramer of gins1/psf1, gins2/psf2, gins3/psf3 and gins4/sld5. Component of the CMG helicase complex, composed of the mcm2-7 complex, the GINS complex and cdc45.

Its subcellular location is the nucleus. It localises to the chromosome. In terms of biological role, required for correct functioning of the GINS complex, a complex that plays an essential role in the initiation of DNA replication, and progression of DNA replication forks. GINS complex is a core component of CDC45-MCM-GINS (CMG) helicase, the molecular machine that unwinds template DNA during replication, and around which the replisome is built. The sequence is that of DNA replication complex GINS protein PSF1 from Xenopus laevis (African clawed frog).